The sequence spans 704 residues: Elongation factor G (704 aa).

Positions 10-290 (NKVRNIGIMA…AVVDFLPSPL (281 aa)) constitute a tr-type G domain. GTP contacts are provided by residues 19–26 (AHIDAGKT), 83–87 (DTPGH), and 137–140 (NKMD). The segment at 293–313 (PPMIGHDPRNEETEMTRKPST) is disordered. Residues 298–313 (HDPRNEETEMTRKPST) show a composition bias toward basic and acidic residues.

Belongs to the TRAFAC class translation factor GTPase superfamily. Classic translation factor GTPase family. EF-G/EF-2 subfamily.

It localises to the cytoplasm. Its function is as follows. Catalyzes the GTP-dependent ribosomal translocation step during translation elongation. During this step, the ribosome changes from the pre-translocational (PRE) to the post-translocational (POST) state as the newly formed A-site-bound peptidyl-tRNA and P-site-bound deacylated tRNA move to the P and E sites, respectively. Catalyzes the coordinated movement of the two tRNA molecules, the mRNA and conformational changes in the ribosome. This is Elongation factor G from Renibacterium salmoninarum (strain ATCC 33209 / DSM 20767 / JCM 11484 / NBRC 15589 / NCIMB 2235).